Reading from the N-terminus, the 174-residue chain is Peptide methionine sulfoxide reductase MsrA (174 aa).

C10 is a catalytic residue.

Belongs to the MsrA Met sulfoxide reductase family.

The catalysed reaction is L-methionyl-[protein] + [thioredoxin]-disulfide + H2O = L-methionyl-(S)-S-oxide-[protein] + [thioredoxin]-dithiol. The enzyme catalyses [thioredoxin]-disulfide + L-methionine + H2O = L-methionine (S)-S-oxide + [thioredoxin]-dithiol. Functionally, has an important function as a repair enzyme for proteins that have been inactivated by oxidation. Catalyzes the reversible oxidation-reduction of methionine sulfoxide in proteins to methionine. This is Peptide methionine sulfoxide reductase MsrA from Acinetobacter baumannii (strain SDF).